We begin with the raw amino-acid sequence, 79 residues long: UPF0180 protein BCAH820_1484 (79 aa).

This sequence belongs to the UPF0180 family.

The polypeptide is UPF0180 protein BCAH820_1484 (Bacillus cereus (strain AH820)).